Here is a 386-residue protein sequence, read N- to C-terminus: MKRQALAAIIASMFALAACGGEPAAQTPAASAEAASSAAQTAAETPAGELPVIDAVTTHAPEVPPAIDRDYPAKVRVKMETVEKTMKMDDGVEYRYWTFDGDVPGRMIRVREGDTVEVEFSNNPSSTVPHNVDFHAATGQGGGAAATFTAPGRTSTFSFKALQPGLYIYHCAVAPVGMHIANGMYGLILVEPKEGLPKVDKEFYIVQGDFYTKGKKGAQGLQPFDMDKAIAEQPEYVVFNGHVGAIAGDNALKAKAGETVRMYVGNGGPNLVSSFHVIGEIFDKVYVEGGKLINENVQSTIVPAGGSAIVEFKVDIPGSYTLVDHSIFRAFNKGALGQLKVEGAENPEIMTQKLSDTAYAGNGAAPAASAPAASAPAASAPAKSDY.

An N-terminal signal peptide occupies residues 1–18; sequence MKRQALAAIIASMFALAA. Cysteine 19 carries the N-palmitoyl cysteine lipid modification. Residue cysteine 19 is the site of S-diacylglycerol cysteine attachment. Plastocyanin-like domains follow at residues 97–191 and 241–342; these read WTFD…ILVE and GHVG…LKVE. Cu cation-binding residues include histidine 130, histidine 135, histidine 170, cysteine 171, histidine 179, and methionine 184. Histidine 135 lines the substrate pocket. Substrate is bound at residue histidine 276. Histidine 325 lines the Cu cation pocket. Residues 363–386 are disordered; the sequence is GAAPAASAPAASAPAASAPAKSDY. Residues 364-386 are compositionally biased toward low complexity; the sequence is AAPAASAPAASAPAASAPAKSDY. A run of 3 repeats spans residues 367–371, 372–376, and 377–381. A 3 X 5 AA tandem repeats of A-A-S-A-P region spans residues 367–381; it reads AASAPAASAPAASAP.

Belongs to the multicopper oxidase family. Homotrimer. Requires Cu(+) as cofactor. Cu(2+) is required as a cofactor.

The protein localises to the cell outer membrane. It carries out the reaction nitric oxide + Fe(III)-[cytochrome c] + H2O = Fe(II)-[cytochrome c] + nitrite + 2 H(+). Functionally, catalyzes the reduction of nitrite to nitric oxide (NO). It could be essential for growth and survival in oxygen-depleted environments. The chain is Copper-containing nitrite reductase (aniA) from Neisseria meningitidis serogroup A / serotype 4A (strain DSM 15465 / Z2491).